A 688-amino-acid polypeptide reads, in one-letter code: Subtilisin-like protease 1 (688 aa).

The signal sequence occupies residues 1 to 25 (MMLNKKVVALCTLTLHLFCIFLCLG). The propeptide at 26–217 (KEVRSEENGK…IESDKLVSAD (192 aa)) is inhibition peptide. A disordered region spans residues 99 to 129 (EKNKNDNHNNNNNNISSSSSSSSNTFGEEKE). A compositionally biased stretch (low complexity) spans 106–122 (HNNNNNNISSSSSSSSN). Asparagine 112 is a glycosylation site (N-linked (GlcNAc...) asparagine). Residues asparagine 145, threonine 148, and proline 150 each contribute to the Ca(2+) site. Asparagine 171 carries an N-linked (GlcNAc...) asparagine glycan. Position 205 (glycine 205) interacts with Ca(2+). Residue asparagine 261 is glycosylated (N-linked (GlcNAc...) asparagine). Disordered stretches follow at residues 264 to 284 (HAATSKRKRHSTNERGYDTFS) and 303 to 332 (NNNNYYYSHSSNGHNSSSRNSSSSRSRPGK). The segment covering 303 to 328 (NNNNYYYSHSSNGHNSSSRNSSSSRS) has biased composition (low complexity). N-linked (GlcNAc...) asparagine glycosylation is found at asparagine 317 and asparagine 322. Aspartate 337 lines the Ca(2+) pocket. Residues 343–661 (QWGLDLSRLD…AGYADINKAV (319 aa)) form the Peptidase S8 domain. Disulfide bonds link cysteine 369–cysteine 479 and cysteine 458–cysteine 475. Aspartate 372 (charge relay system) is an active-site residue. Ca(2+)-binding residues include aspartate 381, glutamate 392, arginine 396, phenylalanine 399, aspartate 400, aspartate 401, aspartate 402, asparagine 404, isoleucine 406, aspartate 408, and aspartate 409. An N-linked (GlcNAc...) asparagine glycan is attached at asparagine 417. Histidine 428 functions as the Charge relay system in the catalytic mechanism. Ca(2+) is bound by residues isoleucine 439, asparagine 442, isoleucine 444, and valine 446. N-linked (GlcNAc...) asparagine glycans are attached at residues asparagine 488, asparagine 501, and asparagine 520. Cysteine 521 and cysteine 534 are disulfide-bonded. An N-linked (GlcNAc...) asparagine glycan is attached at asparagine 603. Serine 606 acts as the Charge relay system in catalysis. An N-linked (GlcNAc...) asparagine glycan is attached at asparagine 675.

Belongs to the peptidase S8 family. In terms of assembly, heterodimer between p54 form and prodomain p31; the interaction inhibits p54 catalytic activity. Heterodimer p31-p54 is monomeric at basic pH and dimeric at acidic pH; dimerization is driven by the N-terminal prodomain (p31). The cofactor is Ca(2+). In terms of processing, the prodomain (p31) is cleaved, probably by autocatalysis, during the transport to or in the Golgi apparatus, and remains non-covalently associated with the p54 form as an inhibitor. p54 is further cleaved into the p47 form. The p54-to-p47 conversion can be also autocatalytic. This cleavage is likely occurring in the exoneme prior to egress and is mediated by PMX/plasmepsin X. Heterodimer p31-p54 is activated by cleavage of prodomain (p31) by the aspartic protease PMX; cleavage by PMX abolishes inhibitory capacity of p31. Primary autocatalytic processing of SUB1 is essential for parasite growth; the p54-to-p47 conversion is dispensable for SUB1 functions in the parasites. The disulfide bond between Cys-521 and Cys-534 acts as a redox-sensitive disulfide switch. The oxidized form is required for catalytic activity. Post-translationally, the relevance of the N-glycosylation is not clear. In an insect expression system, SUB1 glycosylation appears to affect its processing into the active mature form suggesting that SUB1 may not be N-glycosylated in parasites.

The protein localises to the secreted. Its subcellular location is the parasitophorous vacuole lumen. It carries out the reaction Hydrolysis of proteins with broad specificity for peptide bonds, and a preference for a large uncharged residue in P1. Hydrolyzes peptide amides.. P54 and probably p47 forms are inhibited by the non-covalent interaction with the cleaved propeptide. Inhibited by subtilisin propeptide-like protein SUB1-ProM. Inhibited by small molecule MRT12113. In terms of biological role, serine protease which plays an essential role in merozoite invasion of and egress from host erythrocytes by processing and activating various merozoite surface and parasitophorous vacuole proteins. Mediates the proteolytic maturation of serine proteases SERA4, SERA5 and SERA6 just prior to merozoite egress. Prior to merozoite egress, cleaves merozoite surface proteins MSP1, MSP6 and MSP7, which form the MSP1/6/7 complex, and thereby may prime the parasite cell surface for invasion of fresh erythrocytes. Prior to merozoite egress, cleaves MSRP2 converting it to MSRP2 p25 form, and RAP1 converting it to RAP1 p67 form. This Plasmodium falciparum (isolate 3D7) protein is Subtilisin-like protease 1.